The chain runs to 445 residues: Tripartite motif-containing protein 43B (445 aa).

An RING-type zinc finger spans residues 16–57 (CSICQGIFMNPVYLKCGHKFCEACLLLFQEDIKFPAYCPMCM). The B box-type zinc finger occupies 88-129 (SEEHKCVTHKAKKMIFCDKSKILLCHLCSDSQEHSGHTHCSI). Residues cysteine 93, histidine 96, cysteine 115, and histidine 121 each contribute to the Zn(2+) site. One can recognise a B30.2/SPRY domain in the interval 271 to 445 (RLRAHSIPGL…VRPFFSAVYT (175 aa)).

Belongs to the TRIM/RBCC family.

This Mus musculus (Mouse) protein is Tripartite motif-containing protein 43B.